The sequence spans 205 residues: Proteasome subunit beta type-3 (205 aa).

An N-acetylserine modification is found at Ser2. Lys77 carries the N6-acetyllysine modification.

This sequence belongs to the peptidase T1B family. The 26S proteasome consists of a 20S proteasome core and two 19S regulatory subunits. The 20S proteasome core is a barrel-shaped complex made of 28 subunits that are arranged in four stacked rings. The two outer rings are each formed by seven alpha subunits, and the two inner rings are formed by seven beta subunits. The proteolytic activity is exerted by three beta-subunits PSMB5, PSMB6 and PSMB7.

It localises to the cytoplasm. It is found in the nucleus. Non-catalytic component of the 20S core proteasome complex involved in the proteolytic degradation of most intracellular proteins. This complex plays numerous essential roles within the cell by associating with different regulatory particles. Associated with two 19S regulatory particles, forms the 26S proteasome and thus participates in the ATP-dependent degradation of ubiquitinated proteins. The 26S proteasome plays a key role in the maintenance of protein homeostasis by removing misfolded or damaged proteins that could impair cellular functions, and by removing proteins whose functions are no longer required. Associated with the PA200 or PA28, the 20S proteasome mediates ubiquitin-independent protein degradation. This type of proteolysis is required in several pathways including spermatogenesis (20S-PA200 complex) or generation of a subset of MHC class I-presented antigenic peptides (20S-PA28 complex). This chain is Proteasome subunit beta type-3 (PSMB3), found in Bos taurus (Bovine).